Here is a 188-residue protein sequence, read N- to C-terminus: Large ribosomal subunit protein bL35m (188 aa).

It belongs to the bacterial ribosomal protein bL35 family. In terms of assembly, component of the mitochondrial large ribosomal subunit (mt-LSU). Mature mammalian 55S mitochondrial ribosomes consist of a small (28S) and a large (39S) subunit. The 28S small subunit contains a 12S ribosomal RNA (12S mt-rRNA) and 30 different proteins. The 39S large subunit contains a 16S rRNA (16S mt-rRNA), a copy of mitochondrial valine transfer RNA (mt-tRNA(Val)), which plays an integral structural role, and 52 different proteins.

Its subcellular location is the mitochondrion. This is Large ribosomal subunit protein bL35m (MRPL35) from Homo sapiens (Human).